We begin with the raw amino-acid sequence, 801 residues long: Protein ACCUMULATION AND REPLICATION OF CHLOROPLASTS 6, chloroplastic (801 aa).

A chloroplast-targeting transit peptide spans 1–67 (MEALSHVGIG…SSSFATATTT (67 aa)). Residues 68 to 618 (ATLVSPPPSI…ADMLKEASVK (551 aa)) are Stromal-facing. The J domain maps to 89 to 153 (DFYQVLGAQT…RSRREYNEGL (65 aa)). Residues 619–638 (ILAAGVAIGLISLFSQKYFL) form a helical membrane-spanning segment. Residues 639–801 (KSSSSFQRKD…KITEGSVLAS (163 aa)) lie on the Chloroplast intermembrane side of the membrane. The interval 639-801 (KSSSSFQRKD…KITEGSVLAS (163 aa)) is interaction with PDV2.

As to quaternary structure, self-interacts. Part of a complex made of ARC3, ARC6, FTSZ1 and FTSZ2. Interacts with FTSZ2-1 and FTSZ2-2 (via C-terminus), but not with FTSZ1; this interaction enables ARC3 binding to FTSZ2. Binds to CDT1A. Interacts (via C-terminus) with PDV2 (via C-terminus) in the chloroplast intermembrane space; this interaction induces homodimerization and leads to the formation of a heterotetramer containing two ARC6 and two PDV2 subunits. Interacts with MCD1 in the chloroplast stroma and facilitates its subsequent binding to FtsZ2-1. Interacts (via J domain) with CJD1 (via J-like domain). In terms of tissue distribution, mostly expressed in young leaves.

The protein localises to the plastid. It localises to the chloroplast inner membrane. Component of the plastid division machinery consisting in a binary fission accomplished by the simultaneous constriction of the FtsZ ring on the stromal side of the inner envelope membrane, and the ARC5 ring on the cytosolic side of the outer envelope membrane. Involved in the initiation of proplastid and plastid division (including chloroplasts, statoliths and leukoplasts). Promotes the assembly and/or stabilization of the plastid-dividing FtsZ ring, functioning as an antagonistic regulator of FtsZ dynamics against CDP1 and facilitating MCD1 positioning to membrane tethered FtsZ filaments to form the chloroplast Z-Ring; inhibits GDP-induced disassembly of FTSZ2 but enables ARC3 binding to FTSZ2-1. Relays plastid division site position between stroma and outer surface via interactions with the stromal FtsZ ring and the outer membrane PDV2 that recruits cytoplasmic ARC5 ring. Required for plastid equatorial positioning of PDV2 and ARC5. May contribute to gravitropism in stems and hypocotyls. Seems to influence stromule (stroma-filled tubular extensions of the plastid envelope membrane) length and frequency. In Arabidopsis thaliana (Mouse-ear cress), this protein is Protein ACCUMULATION AND REPLICATION OF CHLOROPLASTS 6, chloroplastic.